The chain runs to 318 residues: Protoheme IX farnesyltransferase (318 aa).

The next 9 helical transmembrane spans lie at 37 to 57 (VMEL…RGLP), 59 to 79 (IWLI…AGAF), 108 to 128 (EALV…WFGA), 131 to 151 (LAGL…TLIL), 158 to 178 (NIVW…AAVT), 183 to 203 (WPAI…YWPL), 216 to 238 (VPML…YTWA), 249 to 269 (LGHA…WFLL), and 296 to 316 (ISYL…GMPL).

It belongs to the UbiA prenyltransferase family. Protoheme IX farnesyltransferase subfamily.

It localises to the cell membrane. The enzyme catalyses heme b + (2E,6E)-farnesyl diphosphate + H2O = Fe(II)-heme o + diphosphate. Its pathway is porphyrin-containing compound metabolism; heme O biosynthesis; heme O from protoheme: step 1/1. Its function is as follows. Converts heme B (protoheme IX) to heme O by substitution of the vinyl group on carbon 2 of heme B porphyrin ring with a hydroxyethyl farnesyl side group. In Renibacterium salmoninarum (strain ATCC 33209 / DSM 20767 / JCM 11484 / NBRC 15589 / NCIMB 2235), this protein is Protoheme IX farnesyltransferase.